The primary structure comprises 303 residues: NAD(+)--arginine ADP-ribosyltransferase Lart1 (303 aa).

It is found in the secreted. The enzyme catalyses L-arginyl-[protein] + NAD(+) = N(omega)-(ADP-D-ribosyl)-L-arginyl-[protein] + nicotinamide + H(+). In terms of biological role, ADP-ribosyltransferase that targets a specific class of NAD(+)-dependent glutamate dehydrogenase (GDH) enzymes found in fungi and protists, including many natural hosts of Legionella. Acts by targeting a conserved arginine residue in the NAD(+)-binding pocket of GDH, thereby blocking oxidative deamination of glutamate. Lart1 may target amoeba GDH to prevent a conserved stress response. In vitro, acts on Glud2 from the amoeba Dictyostelium discoideum (DdGluD2) and yeast Gdh2p but does not act on human or Legionella GDH homologs. In Legionella pneumophila subsp. pneumophila (strain Philadelphia 1 / ATCC 33152 / DSM 7513), this protein is NAD(+)--arginine ADP-ribosyltransferase Lart1.